The primary structure comprises 492 residues: uncharacterized protein (492 aa).

266 to 273 (GIQGTGKS) provides a ligand contact to ATP.

This sequence belongs to the AAA ATPase family. Highly divergent.

It is found in the plastid. Its subcellular location is the chloroplast. This is an uncharacterized protein from Pyropia yezoensis (Susabi-nori).